Here is a 270-residue protein sequence, read N- to C-terminus: 3-methyl-2-oxobutanoate hydroxymethyltransferase (270 aa).

D43 and D82 together coordinate Mg(2+). 3-methyl-2-oxobutanoate-binding positions include 43-44 (DS), D82, and K112. E114 contacts Mg(2+). The Proton acceptor role is filled by E179.

This sequence belongs to the PanB family. Homodecamer; pentamer of dimers. Mg(2+) serves as cofactor.

Its subcellular location is the cytoplasm. The enzyme catalyses 3-methyl-2-oxobutanoate + (6R)-5,10-methylene-5,6,7,8-tetrahydrofolate + H2O = 2-dehydropantoate + (6S)-5,6,7,8-tetrahydrofolate. It participates in cofactor biosynthesis; (R)-pantothenate biosynthesis; (R)-pantoate from 3-methyl-2-oxobutanoate: step 1/2. In terms of biological role, catalyzes the reversible reaction in which hydroxymethyl group from 5,10-methylenetetrahydrofolate is transferred onto alpha-ketoisovalerate to form ketopantoate. The polypeptide is 3-methyl-2-oxobutanoate hydroxymethyltransferase (Oceanobacillus iheyensis (strain DSM 14371 / CIP 107618 / JCM 11309 / KCTC 3954 / HTE831)).